A 713-amino-acid polypeptide reads, in one-letter code: MLNFFAAAPKGFEYSLAQELTEFGATEIKESVAGVYFTAPLALAYRITLWTRLASRIVLVIYKGPCESAEQLYNAAYCIDWSAHFSNRNTFSIDFHGTGGFINNTQFGALKIKDAIVDRFRDDGDARPNVARIDADIKIDAHFRNGVITIAMNFSGPSLHQRGYRSTTGEAPLKENLAANMLVRSGWKAAPTTLLDPFCGSGTVLIEAALMAADIAPGLQRSRFGFEHWRRHDKATWHEILEEAKARASLGVKRCDVKFYGSDIDSRLVALAKRNAQNAGVFELIDFKVANALNVEPPAAEGYLITNPPYGERLGSVSELLQLYYQLGDKFKKEFGGWKVAMLCSDIELISALKLKADKQMKMFNGALECAFNLYTLHAQSTRRDTPVLPEGVDIADIAPAFANRIKKNAKQLEKWAKKEGIDSYRLYDADIPEYNVAVDRYLDHIVVQEYMAPASIPEAVTKRRLSDVLLALPAAIGVDPHKITMKTRERQKGTNQYQKLDERKLELITTEYGAKFKLNLTGYLDTGLFLDHRLTRRLVGQKSKGRRVLNLFSYTGSASVHAALGGAKSVTTVDMSNTYLAWAKENFALNDLSGKQYEFVQADCLQWIRDSAHDKSAQYDLIFIDPPTFSNSKRMEDSFDVQRDHVNLLGMLIKLLSPNGEIVFSNNKRKFKMDTDTLVKMKIKVENIDDLTLPMDYKRNPHIHNTWLITHA.

The THUMP domain maps to 43-154 (LAYRITLWTR…NGVITIAMNF (112 aa)).

It belongs to the methyltransferase superfamily. RlmKL family.

It is found in the cytoplasm. The catalysed reaction is guanosine(2445) in 23S rRNA + S-adenosyl-L-methionine = N(2)-methylguanosine(2445) in 23S rRNA + S-adenosyl-L-homocysteine + H(+). It carries out the reaction guanosine(2069) in 23S rRNA + S-adenosyl-L-methionine = N(2)-methylguanosine(2069) in 23S rRNA + S-adenosyl-L-homocysteine + H(+). Its function is as follows. Specifically methylates the guanine in position 2445 (m2G2445) and the guanine in position 2069 (m7G2069) of 23S rRNA. The chain is Ribosomal RNA large subunit methyltransferase K/L from Shewanella sp. (strain ANA-3).